Here is a 39-residue protein sequence, read N- to C-terminus: SYSMEHFRWGKPVGRKRRPVKVYPNGVQEETSEGFPLEF.

Val-13 carries the post-translational modification Valine amide.

Belongs to the POMC family.

The protein resides in the secreted. Its function is as follows. Precursor protein for pituitary hormones that regulate stress and environmental adaptation. Stimulates the adrenal glands to release cortisol. Functionally, anorexigenic peptide. Increases the pigmentation of skin by increasing melanin production in melanocytes. The sequence is that of Pro-opiomelanocortin (POMC) from Struthio camelus (Common ostrich).